A 132-amino-acid chain; its full sequence is uncharacterized protein (132 aa).

The signal sequence occupies residues 1 to 24; it reads MVTIGSSSLVLFLFFVVFVQITYT. 2 helical membrane passes run 75–95 and 112–132; these read YVNV…ILGI and ESAI…VYIH.

It is found in the membrane. This is an uncharacterized protein from Saccharomyces cerevisiae (strain ATCC 204508 / S288c) (Baker's yeast).